Here is a 150-residue protein sequence, read N- to C-terminus: Peptide methionine sulfoxide reductase MsrB (150 aa).

One can recognise a MsrB domain in the interval 9–132 (EAELKRTLTK…NSAALKFIPF (124 aa)). Cys121 acts as the Nucleophile in catalysis.

Belongs to the MsrB Met sulfoxide reductase family.

The enzyme catalyses L-methionyl-[protein] + [thioredoxin]-disulfide + H2O = L-methionyl-(R)-S-oxide-[protein] + [thioredoxin]-dithiol. The chain is Peptide methionine sulfoxide reductase MsrB from Mycoplasma genitalium (strain ATCC 33530 / DSM 19775 / NCTC 10195 / G37) (Mycoplasmoides genitalium).